The following is a 382-amino-acid chain: MNSLDLPKAPQDTRVVVAMSGGVDSSVVAGLLRRQGYDVVGITLQLYDHGAATHRRGACCAGQDIHDARRAAETLGIPHYVLDYEDRFREAVIDRFAESYIHGETPIPCVECNRSIKFRDLLATALDLGADALATGHYVASRARPGGGRALYRALDPARDQSYFLYATTPEQLDVLRFPLGELPKDETRRLAREFGLAVADKPDSQDICFVPQGRYQDVIARLRPDAARPGEIVHLDGRTLGRHEGIIGFTVGQRRGLGLATGEPLYVVRLDPETARVVVGPREALATSVIRIAETNWLGDEPLADLDGMPVAVRVRSTREPRPAALRWNRALACAEVVLETPEDGVSPGQACAIYADDGPRARVLGGGTIQKVEAARREAA.

Residues 18 to 25 and L44 contribute to the ATP site; that span reads AMSGGVDS. The active-site Nucleophile is the C112. C112 and C209 form a disulfide bridge. Position 136 (G136) interacts with ATP. The segment at 159–161 is interaction with tRNA; that stretch reads RDQ. The Cysteine persulfide intermediate role is filled by C209.

This sequence belongs to the MnmA/TRMU family.

It localises to the cytoplasm. The catalysed reaction is S-sulfanyl-L-cysteinyl-[protein] + uridine(34) in tRNA + AH2 + ATP = 2-thiouridine(34) in tRNA + L-cysteinyl-[protein] + A + AMP + diphosphate + H(+). In terms of biological role, catalyzes the 2-thiolation of uridine at the wobble position (U34) of tRNA, leading to the formation of s(2)U34. The polypeptide is tRNA-specific 2-thiouridylase MnmA (Methylobacterium sp. (strain 4-46)).